The sequence spans 475 residues: Ribulose bisphosphate carboxylase large chain (475 aa).

The propeptide occupies 1–2 (MS). P3 bears the N-acetylproline mark. K14 is modified (N6,N6,N6-trimethyllysine). Residues N123 and T173 each coordinate substrate. K175 acts as the Proton acceptor in catalysis. K177 serves as a coordination point for substrate. Mg(2+) contacts are provided by K201, D203, and E204. K201 bears the N6-carboxylysine mark. The active-site Proton acceptor is the H294. R295, H327, and S379 together coordinate substrate.

The protein belongs to the RuBisCO large chain family. Type I subfamily. Heterohexadecamer of 8 large chains and 8 small chains; disulfide-linked. The disulfide link is formed within the large subunit homodimers. The cofactor is Mg(2+). In terms of processing, the disulfide bond which can form in the large chain dimeric partners within the hexadecamer appears to be associated with oxidative stress and protein turnover.

Its subcellular location is the plastid. It is found in the chloroplast. The enzyme catalyses 2 (2R)-3-phosphoglycerate + 2 H(+) = D-ribulose 1,5-bisphosphate + CO2 + H2O. It carries out the reaction D-ribulose 1,5-bisphosphate + O2 = 2-phosphoglycolate + (2R)-3-phosphoglycerate + 2 H(+). Its function is as follows. RuBisCO catalyzes two reactions: the carboxylation of D-ribulose 1,5-bisphosphate, the primary event in carbon dioxide fixation, as well as the oxidative fragmentation of the pentose substrate in the photorespiration process. Both reactions occur simultaneously and in competition at the same active site. The protein is Ribulose bisphosphate carboxylase large chain of Betula papyrifera (Paper birch).